Consider the following 561-residue polypeptide: Bifunctional NAD(P)H-hydrate repair enzyme (561 aa).

An NAD(P)H-hydrate epimerase region spans residues methionine 1–alanine 241. A YjeF N-terminal domain is found at leucine 29–alanine 235. The interval asparagine 77–aspartate 81 is NADPHX 1; for epimerase activity. The K(+) site is built by asparagine 78 and aspartate 145. The NADPHX 1; for epimerase activity stretch occupies residues glycine 149–proline 155. The (6S)-NADPHX site is built by tyrosine 160 and aspartate 178. Serine 181 provides a ligand contact to K(+). A YjeF C-terminal domain is found at leucine 249 to serine 548. The interval leucine 249–leucine 561 is ADP-dependent (S)-NAD(P)H-hydrate dehydratase. A (6S)-NADPHX-binding site is contributed by glycine 351. Positions histidine 417–arginine 423 are NADPHX 2; for dehydratase activity. Residues lysine 454–threonine 458 and asparagine 475–glycine 484 contribute to the ADP site. Aspartate 485 contacts (6S)-NADPHX.

This sequence in the N-terminal section; belongs to the NnrE/AIBP family. It in the C-terminal section; belongs to the NnrD/CARKD family. It depends on K(+) as a cofactor.

The enzyme catalyses (6S)-NADHX + ADP = AMP + phosphate + NADH + H(+). The catalysed reaction is (6S)-NADPHX + ADP = AMP + phosphate + NADPH + H(+). It catalyses the reaction (6R)-NADHX = (6S)-NADHX. It carries out the reaction (6R)-NADPHX = (6S)-NADPHX. Its function is as follows. Bifunctional enzyme that catalyzes the epimerization of the S- and R-forms of NAD(P)HX and the dehydration of the S-form of NAD(P)HX at the expense of ADP, which is converted to AMP. This allows the repair of both epimers of NAD(P)HX, a damaged form of NAD(P)H that is a result of enzymatic or heat-dependent hydration. This chain is Bifunctional NAD(P)H-hydrate repair enzyme, found in Leishmania braziliensis.